We begin with the raw amino-acid sequence, 384 residues long: V-type proton ATPase subunit C 2 (384 aa).

It belongs to the V-ATPase C subunit family. In terms of assembly, V-ATPase is a heteromultimeric enzyme made up of two complexes: the ATP-hydrolytic V1 complex and the proton translocation V0 complex. The V1 complex consists of three catalytic AB heterodimers that form a heterohexamer, three peripheral stalks each consisting of EG heterodimers, one central rotor including subunits D and F, and the regulatory subunits C and H. The proton translocation complex V0 consists of the proton transport subunit a, a ring of proteolipid subunits c9c'', rotary subunit d, subunits e and f, and the accessory subunits vah-19/Ac45 and vah-20/PRR.

Its function is as follows. Subunit of the V1 complex of vacuolar(H+)-ATPase (V-ATPase), a multisubunit enzyme composed of a peripheral complex (V1) that hydrolyzes ATP and a membrane integral complex (V0) that translocates protons. V-ATPase is responsible for acidifying and maintaining the pH of intracellular compartments and in some cell types, is targeted to the plasma membrane, where it is responsible for acidifying the extracellular environment. Subunit C is necessary for the assembly of the catalytic sector of the enzyme and is likely to have a specific function in its catalytic activity. This Ascidia sydneiensis samea (Vanadium-rich ascidian) protein is V-type proton ATPase subunit C 2 (VATC).